Reading from the N-terminus, the 120-residue chain is Large ribosomal subunit protein uL18 (120 aa).

This sequence belongs to the universal ribosomal protein uL18 family. In terms of assembly, part of the 50S ribosomal subunit; part of the 5S rRNA/L5/L18/L25 subcomplex. Contacts the 5S and 23S rRNAs.

In terms of biological role, this is one of the proteins that bind and probably mediate the attachment of the 5S RNA into the large ribosomal subunit, where it forms part of the central protuberance. The protein is Large ribosomal subunit protein uL18 of Clostridium novyi (strain NT).